The sequence spans 130 residues: Glycine cleavage system H protein (130 aa).

A Lipoyl-binding domain is found at 22-103; sequence KAYIGISDCA…PYGSWIIAVE (82 aa). N6-lipoyllysine is present on Lys-63.

This sequence belongs to the GcvH family. In terms of assembly, the glycine cleavage system is composed of four proteins: P, T, L and H. Requires (R)-lipoate as cofactor.

Functionally, the glycine cleavage system catalyzes the degradation of glycine. The H protein shuttles the methylamine group of glycine from the P protein to the T protein. In Clostridium botulinum (strain Kyoto / Type A2), this protein is Glycine cleavage system H protein.